We begin with the raw amino-acid sequence, 89 residues long: uncharacterized protein (89 aa).

This is an uncharacterized protein from Borreliella burgdorferi (strain ATCC 35210 / DSM 4680 / CIP 102532 / B31) (Borrelia burgdorferi).